The sequence spans 167 residues: MAESEAPIIEAGKVSKWLTDNGFDHEFLAPDHQGIEIIKGNRDFLIPLATALYAYGFNYLQCQCAYDAGPGEDLVSMYHLVKVSDDVEQPEEIRLKVFVPRDDPRLPSVYWIWKSADFQERESYDMYGIIYEGHPNLKRILMPEDWVGWPLRKDYISPEFYELQDAY.

Belongs to the complex I 30 kDa subunit family. As to quaternary structure, NDH-1 can be composed of about 15 different subunits; different subcomplexes with different compositions have been identified which probably have different functions.

It is found in the cellular thylakoid membrane. The catalysed reaction is a plastoquinone + NADH + (n+1) H(+)(in) = a plastoquinol + NAD(+) + n H(+)(out). It carries out the reaction a plastoquinone + NADPH + (n+1) H(+)(in) = a plastoquinol + NADP(+) + n H(+)(out). In terms of biological role, NDH-1 shuttles electrons from an unknown electron donor, via FMN and iron-sulfur (Fe-S) centers, to quinones in the respiratory and/or the photosynthetic chain. The immediate electron acceptor for the enzyme in this species is believed to be plastoquinone. Couples the redox reaction to proton translocation, and thus conserves the redox energy in a proton gradient. Cyanobacterial NDH-1 also plays a role in inorganic carbon-concentration. This Trichodesmium erythraeum (strain IMS101) protein is NAD(P)H-quinone oxidoreductase subunit J.